Reading from the N-terminus, the 239-residue chain is MSIEWLSEKLSEQGIELSNTQKEQFQKYYKLLVEWNKKMNLTSITDEHDVYLKHFYDSIAPSFYYDFNGQLSLCDIGAGAGFPSIPLKIVYPELKVTIVDSLNKRIQFLNHLAAELGLEDVSFVHDRAETYGKGVYRESYDIVTARAVARLTVLSELCLPLVNKGGQFLALKSSKGKEELQEATFAINILGGNVKETYTFELPENAGERQMIIIDKRRQTSKKYPRKPGTPNKSPLVES.

S-adenosyl-L-methionine-binding positions include glycine 77, phenylalanine 82, 128-129 (AE), and arginine 146. Residues 217-239 (RRQTSKKYPRKPGTPNKSPLVES) are disordered.

The protein belongs to the methyltransferase superfamily. RNA methyltransferase RsmG family.

It is found in the cytoplasm. Functionally, specifically methylates the N7 position of guanine in position 535 of 16S rRNA. The polypeptide is Ribosomal RNA small subunit methyltransferase G (Staphylococcus epidermidis (strain ATCC 12228 / FDA PCI 1200)).